Here is a 433-residue protein sequence, read N- to C-terminus: Trigger factor (433 aa).

Residues 161-246 (DSRVTIDFIG…LHKVEAQELP (86 aa)) form the PPIase FKBP-type domain.

This sequence belongs to the FKBP-type PPIase family. Tig subfamily.

It localises to the cytoplasm. It carries out the reaction [protein]-peptidylproline (omega=180) = [protein]-peptidylproline (omega=0). Involved in protein export. Acts as a chaperone by maintaining the newly synthesized protein in an open conformation. Functions as a peptidyl-prolyl cis-trans isomerase. The sequence is that of Trigger factor from Photobacterium profundum (strain SS9).